We begin with the raw amino-acid sequence, 157 residues long: Transcription elongation factor GreA (157 aa).

The stretch at 10–76 forms a coiled coil; it reads THEGKQKLEQ…TLENMIRNAK (67 aa).

It belongs to the GreA/GreB family.

Its function is as follows. Necessary for efficient RNA polymerase transcription elongation past template-encoded arresting sites. The arresting sites in DNA have the property of trapping a certain fraction of elongating RNA polymerases that pass through, resulting in locked ternary complexes. Cleavage of the nascent transcript by cleavage factors such as GreA or GreB allows the resumption of elongation from the new 3'terminus. GreA releases sequences of 2 to 3 nucleotides. This Bacillus velezensis (strain DSM 23117 / BGSC 10A6 / LMG 26770 / FZB42) (Bacillus amyloliquefaciens subsp. plantarum) protein is Transcription elongation factor GreA.